Reading from the N-terminus, the 241-residue chain is Eukaryotic translation initiation factor 3 subunit J (241 aa).

Positions methionine 1 to aspartate 27 are enriched in basic and acidic residues. Positions methionine 1 to alanine 99 are disordered. Positions glycine 28–leucine 45 are enriched in acidic residues. Residues glutamate 31–threonine 119 are a coiled coil. Composition is skewed to basic and acidic residues over residues glutamate 46–lysine 58 and isoleucine 69–glutamate 90.

The protein belongs to the eIF-3 subunit J family. Component of the eukaryotic translation initiation factor 3 (eIF-3) complex.

It is found in the cytoplasm. Functionally, component of the eukaryotic translation initiation factor 3 (eIF-3) complex, which is involved in protein synthesis of a specialized repertoire of mRNAs and, together with other initiation factors, stimulates binding of mRNA and methionyl-tRNAi to the 40S ribosome. The eIF-3 complex specifically targets and initiates translation of a subset of mRNAs involved in cell proliferation. This is Eukaryotic translation initiation factor 3 subunit J from Culex quinquefasciatus (Southern house mosquito).